Here is a 2682-residue protein sequence, read N- to C-terminus: 3-methylorcinaldehyde synthase (2682 aa).

Residues 111 to 272 (LIPLVVIEQL…TEITLYGAFH (162 aa)) are N-terminal acylcarrier protein transacylase domain (SAT). Cys-154 functions as the Nucleophile; for transacylase activity in the catalytic mechanism. His-272 (proton donor/acceptor; for transacylase activity) is an active-site residue. Residues 401–826 (ESDIAVIGMA…GSNASMIVMQ (426 aa)) enclose the Ketosynthase family 3 (KS3) domain. Residues Cys-573, His-708, and His-749 each act as for beta-ketoacyl synthase activity in the active site. Positions 947–1237 (FGGQVSTHIG…ITAMTSRALD (291 aa)) are malonyl-CoA:ACP transacylase (MAT) domain. The interval 1339 to 1468 (LTFVGFQDSS…GKIKFTNARD (130 aa)) is N-terminal hotdog fold. In terms of domain architecture, PKS/mFAS DH spans 1339-1651 (LTFVGFQDSS…YVKIPKLSMQ (313 aa)). Residues 1367–1649 (LLLGHMTIQT…IAYVKIPKLS (283 aa)) are product template (PT) domain. Catalysis depends on His-1371, which acts as the Proton acceptor; for dehydratase activity. Residues 1496 to 1651 (VDEVLANRSI…YVKIPKLSMQ (156 aa)) are C-terminal hotdog fold. Residue Asp-1555 is the Proton donor; for dehydratase activity of the active site. Positions 1723 to 1797 (ENITERVKAV…DLMKVVTGVV (75 aa)) constitute a Carrier domain. Ser-1757 carries the post-translational modification O-(pantetheine 4'-phosphoryl)serine. The interval 2021–2211 (EWPLNQVMYT…AGYGHVYWTE (191 aa)) is methyltransferase domain. The NADPH-binding (R) domain stretch occupies residues 2303 to 2548 (VTGATGGLGA…LGWTPADAIA (246 aa)).

The protein operates within secondary metabolite biosynthesis; terpenoid biosynthesis. Its function is as follows. Non-reducing polyketide synthase; part of the gene cluster that mediates the biosynthesis of eupenifeldin, a bistropolone meroterpenoid that acts as an antitumor agent. The first step of eupenifeldin biosynthesis is the biosynthesis of 3-methylorcinaldehyde performed by the non-reducing polyketide synthase eupA. Oxidative dearomatization of 3-methylorcinaldehyde likely catalyzed by the FAD-dependent monooxygenase eupB is followed by oxidative ring expansion by the 2-oxoglutarate-dependent dioxygenase eupC to provide the first tropolone metabolite, tropolone stipitaldehyde. In parallel, generation of sesquiterpene alpha-humulene from farnesylpyrophosphate (FPP) is catalyzed by the terpene cyclase eupE. The cytochrome P450 monooxygenase eupD then hydroxylates humulene to humulenol. The putative Diels-Alderase eupF probably catalyzes the formation of the tropolone-humulene skeleton by linking humulenol and the polyketide moiety. The short-chain dehydrogenase/reductase eupG and the flavin-dependent monooxygenase eupH are also essential for eupenifeldin biosynthesis and are likely the additional decorating enzymes of the tropolone-humulene skeleton to produce final eupenifeldin or derivatives. The protein is 3-methylorcinaldehyde synthase of Phoma sp.